A 98-amino-acid polypeptide reads, in one-letter code: NADH-ubiquinone oxidoreductase chain 4L (98 aa).

3 helical membrane passes run 1 to 21 (MSMV…GLLM), 29 to 49 (SLLC…VAIL), and 61 to 81 (IILL…LVMV).

This sequence belongs to the complex I subunit 4L family. As to quaternary structure, core subunit of respiratory chain NADH dehydrogenase (Complex I) which is composed of 45 different subunits.

It is found in the mitochondrion inner membrane. The catalysed reaction is a ubiquinone + NADH + 5 H(+)(in) = a ubiquinol + NAD(+) + 4 H(+)(out). Functionally, core subunit of the mitochondrial membrane respiratory chain NADH dehydrogenase (Complex I) which catalyzes electron transfer from NADH through the respiratory chain, using ubiquinone as an electron acceptor. Part of the enzyme membrane arm which is embedded in the lipid bilayer and involved in proton translocation. The protein is NADH-ubiquinone oxidoreductase chain 4L (MT-ND4L) of Felis catus (Cat).